Here is a 138-residue protein sequence, read N- to C-terminus: Nucleoside diphosphate kinase (138 aa).

Lys-10, Phe-58, Arg-86, Thr-92, Arg-103, and Asn-113 together coordinate ATP. Residue His-116 is the Pros-phosphohistidine intermediate of the active site.

The protein belongs to the NDK family. In terms of assembly, homotetramer. Mg(2+) is required as a cofactor.

The protein localises to the cytoplasm. The catalysed reaction is a 2'-deoxyribonucleoside 5'-diphosphate + ATP = a 2'-deoxyribonucleoside 5'-triphosphate + ADP. It catalyses the reaction a ribonucleoside 5'-diphosphate + ATP = a ribonucleoside 5'-triphosphate + ADP. In terms of biological role, major role in the synthesis of nucleoside triphosphates other than ATP. The ATP gamma phosphate is transferred to the NDP beta phosphate via a ping-pong mechanism, using a phosphorylated active-site intermediate. The polypeptide is Nucleoside diphosphate kinase (Glaesserella parasuis serovar 5 (strain SH0165) (Haemophilus parasuis)).